The primary structure comprises 394 residues: Elongation factor Tu 1 (394 aa).

In terms of domain architecture, tr-type G spans 10–204 (KPHVNVGTIG…ALDTYIPEPE (195 aa)). Residues 19–26 (GHVDHGKT) are G1. 19–26 (GHVDHGKT) is a binding site for GTP. T26 serves as a coordination point for Mg(2+). Residues 60 to 64 (GITIS) form a G2 region. The interval 81–84 (DCPG) is G3. Residues 81 to 85 (DCPGH) and 136 to 139 (NKCD) each bind GTP. Residues 136–139 (NKCD) are G4. The tract at residues 174 to 176 (SAL) is G5.

Belongs to the TRAFAC class translation factor GTPase superfamily. Classic translation factor GTPase family. EF-Tu/EF-1A subfamily. In terms of assembly, monomer.

It localises to the cytoplasm. It carries out the reaction GTP + H2O = GDP + phosphate + H(+). In terms of biological role, GTP hydrolase that promotes the GTP-dependent binding of aminoacyl-tRNA to the A-site of ribosomes during protein biosynthesis. This Vibrio vulnificus (strain CMCP6) protein is Elongation factor Tu 1.